An 840-amino-acid chain; its full sequence is Probable alpha-glucuronidase A (840 aa).

Residues 1–19 (MWSGIPIFALLSSIGIAAA) form the signal peptide. N-linked (GlcNAc...) asparagine glycans are attached at residues N50, N149, N222, N262, N279, N310, N465, N527, N576, N610, N682, N723, and N732.

Belongs to the glycosyl hydrolase 67 family.

Its subcellular location is the secreted. The enzyme catalyses an alpha-D-glucuronoside + H2O = D-glucuronate + an alcohol. Functionally, alpha-glucuronidase involved in the hydrolysis of xylan, a major structural heterogeneous polysaccharide found in plant biomass representing the second most abundant polysaccharide in the biosphere, after cellulose. Releases 4-O-methylglucuronic acid from xylan. The chain is Probable alpha-glucuronidase A (aguA) from Aspergillus fumigatus (strain CBS 144.89 / FGSC A1163 / CEA10) (Neosartorya fumigata).